Here is a 610-residue protein sequence, read N- to C-terminus: DNA mismatch repair protein MutL (610 aa).

The protein belongs to the DNA mismatch repair MutL/HexB family.

Its function is as follows. This protein is involved in the repair of mismatches in DNA. It is required for dam-dependent methyl-directed DNA mismatch repair. May act as a 'molecular matchmaker', a protein that promotes the formation of a stable complex between two or more DNA-binding proteins in an ATP-dependent manner without itself being part of a final effector complex. The chain is DNA mismatch repair protein MutL from Rickettsia peacockii (strain Rustic).